Consider the following 21-residue polypeptide: Protein YmjD (21 aa).

This Escherichia coli (strain K12) protein is Protein YmjD (ymjD).